Reading from the N-terminus, the 522-residue chain is Zinc finger protein 329 (522 aa).

Position 30 is a phosphoserine (serine 30). C2H2-type zinc fingers lie at residues 184 to 206, 212 to 234, 240 to 262, 268 to 290, 296 to 318, 324 to 346, 352 to 374, 380 to 402, 408 to 430, 436 to 458, 464 to 486, and 492 to 514; these read YKCAECGKCFKRNSSLVLHHRTH, YTCNDCGKSFSKNYNLIVHRRIH, YKCSKCGKAFSDGSALTQHQRIH, YACLDCGKTFNRNSSLILHQRTH, YRCNECGKPFTDISHLTVHLRIH, YECSRCGKAFRDGSYLTQHERTH, FECVECGKSFSRNSHLIVHQKIH, YECKECGKTFIESAYLIRHQRVH, YGCNQCRKLFRNIAGLIRHQRIH, YECNQCGKAFRDSSCLTKHQRIH, YQCLKCGKSFRQNTHLVVHQRLH, and SQCPHCGKIFRRSWCLARHQRTH.

The protein belongs to the krueppel C2H2-type zinc-finger protein family.

The protein localises to the nucleus. In terms of biological role, may be involved in transcriptional regulation. The polypeptide is Zinc finger protein 329 (Znf329) (Mus musculus (Mouse)).